The chain runs to 118 residues: Cytochrome c oxidase assembly protein COX20, mitochondrial (118 aa).

The residue at position 2 (Ala2) is an N-acetylalanine. Residues 2–33 are Mitochondrial intermembrane-facing; it reads AAPPEPGEPEERKSLKLLGFLDVENTPCARHS. Residues 34–51 traverse the membrane as a helical segment; sequence ILYGSLGSVVAGFGHFLF. Residues 52–60 lie on the Mitochondrial matrix side of the membrane; sequence TSRIRRSCD. Residues 61–77 form a helical membrane-spanning segment; the sequence is VGVGGFILVTLGCWFHC. At 78 to 118 the chain is on the mitochondrial intermembrane side; it reads RYNYAKQRIQERIAREEIKKKILYEGTHLDPERKHNGSSSN.

Belongs to the COX20 family. Found in a complex with TMEM177, COA6, MT-CO2/COX2, COX18, SCO1 and SCO2. Interacts with SCO1, SCO2 and COA6 in a MT-CO2/COX2- and COX18-dependent manner. Interacts with COX18 in a MT-CO2/COX2-dependent manner. Interacts with MT-CO2/COX2. Interacts with TMEM177.

The protein localises to the mitochondrion inner membrane. Its function is as follows. Essential for the assembly of the mitochondrial respiratory chain complex IV (CIV), also known as cytochrome c oxidase. Acts as a chaperone in the early steps of cytochrome c oxidase subunit II (MT-CO2/COX2) maturation, stabilizing the newly synthesized protein and presenting it to metallochaperones SCO1/2 which in turn facilitates the incorporation of the mature MT-CO2/COX2 into the assembling CIV holoenzyme. The protein is Cytochrome c oxidase assembly protein COX20, mitochondrial (COX20) of Homo sapiens (Human).